A 230-amino-acid chain; its full sequence is Cytidylate kinase (230 aa).

12-20 (GPSGAGKGT) serves as a coordination point for ATP.

The protein belongs to the cytidylate kinase family. Type 1 subfamily.

The protein resides in the cytoplasm. It carries out the reaction CMP + ATP = CDP + ADP. It catalyses the reaction dCMP + ATP = dCDP + ADP. The chain is Cytidylate kinase from Yersinia pseudotuberculosis serotype O:1b (strain IP 31758).